The sequence spans 124 residues: Small ribosomal subunit protein uS13 (124 aa).

The tract at residues 95-124 is disordered; sequence GLPVNGQRTRTNARSSKGPRRTVAGKKKAR. Polar residues predominate over residues 100 to 109; that stretch reads GQRTRTNARS. The segment covering 111-124 has biased composition (basic residues); that stretch reads KGPRRTVAGKKKAR.

Belongs to the universal ribosomal protein uS13 family. As to quaternary structure, part of the 30S ribosomal subunit. Forms a loose heterodimer with protein S19. Forms two bridges to the 50S subunit in the 70S ribosome.

Functionally, located at the top of the head of the 30S subunit, it contacts several helices of the 16S rRNA. In the 70S ribosome it contacts the 23S rRNA (bridge B1a) and protein L5 of the 50S subunit (bridge B1b), connecting the 2 subunits; these bridges are implicated in subunit movement. Contacts the tRNAs in the A and P-sites. The chain is Small ribosomal subunit protein uS13 from Tropheryma whipplei (strain TW08/27) (Whipple's bacillus).